Here is a 522-residue protein sequence, read N- to C-terminus: Protein disulfide-isomerase (522 aa).

A signal peptide (or 22) is located at residues 1–28 (MKFSAGAVLSWSSLLLASSVFAQQEAVA). The region spanning 29–141 (PEDSAVVKLA…VQFMIKQSQP (113 aa)) is the Thioredoxin 1 domain. Residues C61 and C64 each act as nucleophile in the active site. C61 and C64 are joined by a disulfide. 4 N-linked (GlcNAc...) asparagine glycosylation sites follow: N82, N117, N155, and N174. A Thioredoxin 2 domain is found at 356 to 485 (FLKGDASPIV…LFDFIKENGH (130 aa)). Catalysis depends on nucleophile residues C406 and C409. C406 and C409 are disulfide-bonded. An N-linked (GlcNAc...) asparagine glycan is attached at N425. The disordered stretch occupies residues 497-522 (AQEKAAEEADADAELADEEDAIHDEL). The segment covering 504–522 (EADADAELADEEDAIHDEL) has biased composition (acidic residues). The Prevents secretion from ER motif lies at 519–522 (HDEL).

It belongs to the protein disulfide isomerase family. In terms of assembly, interacts with EPS1, KAR2 and MNL1. In terms of processing, the N-terminus is blocked.

The protein resides in the endoplasmic reticulum lumen. It catalyses the reaction Catalyzes the rearrangement of -S-S- bonds in proteins.. Its function is as follows. Protein disulfide isomerase of ER lumen required for formation of disulfide bonds in secretory and cell-surface proteins and which unscrambles non-native disulfide bonds. Forms a complex with MNL1 to process unfolded protein-bound Man8GlcNAc2 oligosaccharides to Man7GlcNAc2, promoting degradation in unfolded protein response. This is Protein disulfide-isomerase (PDI1) from Saccharomyces cerevisiae (strain ATCC 204508 / S288c) (Baker's yeast).